The sequence spans 187 residues: Tetratricopeptide repeat protein 36 (187 aa).

TPR repeat units lie at residues 47–80, 82–114, and 119–152; these read VKDL…LPQR, SAYN…SNGK, and CQAL…GSEF.

Belongs to the TTC36 family.

This Danio rerio (Zebrafish) protein is Tetratricopeptide repeat protein 36 (ttc36).